We begin with the raw amino-acid sequence, 450 residues long: tRNA-2-methylthio-N(6)-dimethylallyladenosine synthase (450 aa).

One can recognise an MTTase N-terminal domain in the interval 14 to 132 (GEFFIETWGC…FPNYLNEVKK (119 aa)). Cys23, Cys59, Cys93, Cys169, Cys173, and Cys176 together coordinate [4Fe-4S] cluster. The Radical SAM core domain occupies 155 to 385 (RKNSMKAFVT…VEVLNEISAK (231 aa)). In terms of domain architecture, TRAM spans 388–450 (KAYEGKIEEV…NSFSLTGEEI (63 aa)).

Belongs to the methylthiotransferase family. MiaB subfamily. Monomer. [4Fe-4S] cluster is required as a cofactor.

The protein localises to the cytoplasm. The catalysed reaction is N(6)-dimethylallyladenosine(37) in tRNA + (sulfur carrier)-SH + AH2 + 2 S-adenosyl-L-methionine = 2-methylsulfanyl-N(6)-dimethylallyladenosine(37) in tRNA + (sulfur carrier)-H + 5'-deoxyadenosine + L-methionine + A + S-adenosyl-L-homocysteine + 2 H(+). In terms of biological role, catalyzes the methylthiolation of N6-(dimethylallyl)adenosine (i(6)A), leading to the formation of 2-methylthio-N6-(dimethylallyl)adenosine (ms(2)i(6)A) at position 37 in tRNAs that read codons beginning with uridine. The protein is tRNA-2-methylthio-N(6)-dimethylallyladenosine synthase of Clostridium botulinum (strain ATCC 19397 / Type A).